Reading from the N-terminus, the 692-residue chain is DNA-binding protein RFX2 (692 aa).

Residues 1-26 (MQNSEGGADSPATVALRPAAQPVPAS) are disordered. Ser-26 is modified (phosphoserine). Positions 169 to 244 (TLQWLLDNYE…YHYYGIRLKP (76 aa)) form a DNA-binding region, RFX-type winged-helix. The interval 261–296 (RQQPTHQKPRYRPAQKSDSLGDGSAHSNMHSTPEQA) is disordered. The segment covering 285–294 (AHSNMHSTPE) has biased composition (polar residues). At Ser-386 the chain carries Phosphoserine. Residues 660–685 (DGHSSEADVDGRSLGEPLVKRERSDP) show a composition bias toward basic and acidic residues. The segment at 660 to 692 (DGHSSEADVDGRSLGEPLVKRERSDPSHPLQGI) is disordered.

The protein belongs to the RFX family. As to quaternary structure, homodimer; probably only forms homodimers in testis. Heterodimer; heterodimerizes with RFX1 and RFX3. Expressed at highest level in testis. Expressed at lower level in thymus. Also expressed in stomach, kidney, liver, brain and heart. Weakly expressed in spleen and lung. Within testis, most abundantly present in spermatocytes: present from pachytene spermatocytes to early spermatids (at protein level). Also present in non-germinal tissues.

Its subcellular location is the nucleus. The protein resides in the cytoplasm. Transcription factor that acts as a key regulator of spermatogenesis. Acts by regulating expression of genes required for the haploid phase during spermiogenesis, such as genes required for cilium assembly and function. Recognizes and binds the X-box, a regulatory motif with DNA sequence 5'-GTNRCC(0-3N)RGYAAC-3' present on promoters. Probably activates transcription of the testis-specific histone gene H1-6. In Rattus norvegicus (Rat), this protein is DNA-binding protein RFX2 (Rfx2).